Consider the following 162-residue polypeptide: 18.5 kDa class IV heat shock protein (162 aa).

The 97-residue stretch at 53–149 folds into the sHSP domain; the sequence is TSSSTVNTQL…PPQLPEIEEN (97 aa).

This sequence belongs to the small heat shock protein (HSP20) family. As to quaternary structure, may form oligomeric structures.

Its subcellular location is the cytoplasm. The polypeptide is 18.5 kDa class IV heat shock protein (HSP18.5) (Arabidopsis thaliana (Mouse-ear cress)).